A 177-amino-acid chain; its full sequence is Large ribosomal subunit protein uL6 (177 aa).

The protein belongs to the universal ribosomal protein uL6 family. Part of the 50S ribosomal subunit.

Its function is as follows. This protein binds to the 23S rRNA, and is important in its secondary structure. It is located near the subunit interface in the base of the L7/L12 stalk, and near the tRNA binding site of the peptidyltransferase center. In Teredinibacter turnerae (strain ATCC 39867 / T7901), this protein is Large ribosomal subunit protein uL6.